We begin with the raw amino-acid sequence, 255 residues long: MAAEIRVFTCLKDNFGYLVHDSDSGATASIDAPEAAPILAALAREGWTLTDILVTHHHADHIGGIAELKQATNCRVVAPHDNGAAIPLVDLRVRQGDVVKIGGLLARVLETPGHTLDHVAYVFDDDKALFAADTLFSIGCGRVFEGTYPMMWESLLKLRVLPDDMRLYCGHEYTAANVKFALTVEPNNPALQARAAEVAHLRTAGLPTIPTLLGDEKRANVFLRADEPTVAAGVRLKGAGAVEVFTELRERKNKS.

His-56, His-58, Asp-60, His-61, His-114, Asp-133, and His-171 together coordinate Zn(2+).

It belongs to the metallo-beta-lactamase superfamily. Glyoxalase II family. Monomer. It depends on Zn(2+) as a cofactor.

The enzyme catalyses an S-(2-hydroxyacyl)glutathione + H2O = a 2-hydroxy carboxylate + glutathione + H(+). It participates in secondary metabolite metabolism; methylglyoxal degradation; (R)-lactate from methylglyoxal: step 2/2. In terms of biological role, thiolesterase that catalyzes the hydrolysis of S-D-lactoyl-glutathione to form glutathione and D-lactic acid. The chain is Hydroxyacylglutathione hydrolase from Rhodopseudomonas palustris (strain BisB18).